The sequence spans 551 residues: Membrane protein insertase YidC (551 aa).

A helical transmembrane segment spans residues 3–23; it reads ANHIRILLLVTIAIMFISLMG. Polar residues predominate over residues 33–47; it reads NTKQQTSATQNNSHY. A disordered region spans residues 33 to 59; the sequence is NTKQQTSATQNNSHYDNADSSTNTDVT. Over residues 50–59 the composition is skewed to low complexity; that stretch reads ADSSTNTDVT. A run of 3 helical transmembrane segments spans residues 361 to 381, 431 to 451, and 504 to 524; these read LVGNWGLAIILVTCLIKLIFY, LSGCLPMLIQIPIFISLYWVL, and VMMFLPVIFTFLFASFPSGLV.

The protein belongs to the OXA1/ALB3/YidC family. Type 1 subfamily. Interacts with the Sec translocase complex via SecD. Specifically interacts with transmembrane segments of nascent integral membrane proteins during membrane integration.

The protein localises to the cell inner membrane. In terms of biological role, required for the insertion and/or proper folding and/or complex formation of integral membrane proteins into the membrane. Involved in integration of membrane proteins that insert both dependently and independently of the Sec translocase complex, as well as at least some lipoproteins. Aids folding of multispanning membrane proteins. This Francisella tularensis subsp. tularensis (strain SCHU S4 / Schu 4) protein is Membrane protein insertase YidC.